A 357-amino-acid chain; its full sequence is Protein RecA (357 aa).

71–78 (GPESSGKT) lines the ATP pocket.

The protein belongs to the RecA family.

Its subcellular location is the cytoplasm. Its function is as follows. Can catalyze the hydrolysis of ATP in the presence of single-stranded DNA, the ATP-dependent uptake of single-stranded DNA by duplex DNA, and the ATP-dependent hybridization of homologous single-stranded DNAs. It interacts with LexA causing its activation and leading to its autocatalytic cleavage. The sequence is that of Protein RecA from Ehrlichia ruminantium (strain Gardel).